Reading from the N-terminus, the 276-residue chain is uncharacterized protein (276 aa).

Tyrosine 47 functions as the Proton donor in the catalytic mechanism. Histidine 110 is a substrate binding site.

The protein belongs to the aldo/keto reductase family.

The protein resides in the cytoplasm. Its subcellular location is the nucleus. This is an uncharacterized protein from Schizosaccharomyces pombe (strain 972 / ATCC 24843) (Fission yeast).